A 525-amino-acid polypeptide reads, in one-letter code: GMP synthase [glutamine-hydrolyzing] (525 aa).

The 199-residue stretch at 9–207 (RILILDFGSQ…VRDICQCEAL (199 aa)) folds into the Glutamine amidotransferase type-1 domain. Catalysis depends on C86, which acts as the Nucleophile. Active-site residues include H181 and E183. Positions 208 to 400 (WTPAKIIDDA…LGLPYDMLYR (193 aa)) constitute a GMPS ATP-PPase domain. ATP is bound at residue 235–241 (SGGVDSS).

Homodimer.

The enzyme catalyses XMP + L-glutamine + ATP + H2O = GMP + L-glutamate + AMP + diphosphate + 2 H(+). It functions in the pathway purine metabolism; GMP biosynthesis; GMP from XMP (L-Gln route): step 1/1. Catalyzes the synthesis of GMP from XMP. The polypeptide is GMP synthase [glutamine-hydrolyzing] (Shigella flexneri).